Here is a 284-residue protein sequence, read N- to C-terminus: Protein SCO1 homolog, mitochondrial (284 aa).

The disordered stretch occupies residues 46 to 73 (RAFSAGPPPPGAGPEPKGGQAGSHRPKP). A helical membrane pass occupies residues 81 to 98 (LALTFAIGGSLLAGMKYF). Over 99–284 (KKEKIEKLEK…AHMRSHMKKR (186 aa)) the chain is Mitochondrial intermembrane. The interval 101-114 (EKIEKLEKQRHRSI) is important for dimerization. Cu cation-binding residues include cysteine 152, cysteine 156, and histidine 243. Cysteine 152 and cysteine 156 are disulfide-bonded.

It belongs to the SCO1/2 family. Homodimer. Interacts with COA6. Found in a complex with TMEM177, COX20, COA6, MT-CO2/COX2, COX18 and SCO2. Interacts with TMEM177 in a COX20-dependent manner. Interacts with COX20 in a MT-CO2/COX2- and COX18-dependent manner. Interacts with COX16.

The protein resides in the mitochondrion. It localises to the mitochondrion inner membrane. In terms of biological role, copper metallochaperone essential for the maturation of cytochrome c oxidase subunit II (MT-CO2/COX2). Not required for the synthesis of MT-CO2/COX2 but plays a crucial role in stabilizing MT-CO2/COX2 during its subsequent maturation. Involved in transporting copper to the Cu(A) site on MT-CO2/COX2. Plays an important role in the regulation of copper homeostasis by controlling the abundance and cell membrane localization of copper transporter CTR1. The polypeptide is Protein SCO1 homolog, mitochondrial (Sco1) (Mus musculus (Mouse)).